The primary structure comprises 171 residues: uncharacterized protein (171 aa).

In terms of domain architecture, PfpI endopeptidase spans 3–171; the sequence is KKVAIILANE…FNREIVKQLQ (169 aa).

This sequence belongs to the peptidase C56 family.

This is an uncharacterized protein from Staphylococcus aureus (strain COL).